Consider the following 58-residue polypeptide: MNWKVLEHFPLLLYILAAKTLILCLAFAGVKVYQRKRLEAKQQKVEAEKRKQAEKKES.

The chain crosses the membrane as a helical span at residues 9-29 (FPLLLYILAAKTLILCLAFAG). Positions 29-58 (GVKVYQRKRLEAKQQKVEAEKRKQAEKKES) form a coiled coil.

It is found in the membrane. The protein is Small integral membrane protein 11 (SMIM11) of Bos taurus (Bovine).